The following is a 497-amino-acid chain: Carboxypeptidase Y homolog ARB_02032 (497 aa).

Residues 1-18 form the signal peptide; that stretch reads MRFTQIVAAALCLGATEA. An N-linked (GlcNAc...) asparagine glycan is attached at asparagine 88. Serine 204 is an active-site residue. N-linked (GlcNAc...) asparagine glycosylation is found at asparagine 263 and asparagine 393. Aspartate 403 is a catalytic residue. N-linked (GlcNAc...) asparagine glycosylation occurs at asparagine 417. Residue histidine 469 is part of the active site.

It belongs to the peptidase S10 family.

It is found in the secreted. The catalysed reaction is Release of a C-terminal amino acid with broad specificity.. Involved in degradation of small peptides. The polypeptide is Carboxypeptidase Y homolog ARB_02032 (Arthroderma benhamiae (strain ATCC MYA-4681 / CBS 112371) (Trichophyton mentagrophytes)).